The following is a 555-amino-acid chain: Transmembrane protein 87A (555 aa).

The first 21 residues, 1–21, serve as a signal peptide directing secretion; the sequence is MAAAAWLQVLPVILLLLGAHP. Residues 22–225 are Lumenal-facing; it reads SPLSFFSAGP…YEYLTLEDYP (204 aa). 2 disulfides stabilise this stretch: Cys74-Cys128 and Cys89-Cys431. Asn79, Asn127, Asn157, and Asn160 each carry an N-linked (GlcNAc...) asparagine glycan. The chain crosses the membrane as a helical span at residues 226–246; it reads LMIFFMVMCIVYVLFGVLWLA. Topologically, residues 247 to 257 are cytoplasmic; sequence WSACYWRDLLR. A helical transmembrane segment spans residues 258–278; the sequence is IQFWIGAVIFLGMLEKAVFYA. Over 279-305 the chain is Lumenal; that stretch reads EFQNIRYKGESVQGALILAELLSAVKR. Residues 306–322 form a helical membrane-spanning segment; the sequence is SLARTLVIIVSLGYGIV. The Cytoplasmic portion of the chain corresponds to 323 to 325; sequence KPR. The helical transmembrane segment at 326 to 346 threads the bilayer; the sequence is LGVTLHKVVVAGALYLLFSGM. Residues 347–361 are Lumenal-facing; that stretch reads EGVLRVTGAQTDLAS. A helical transmembrane segment spans residues 362 to 382; it reads LAFIPLAFLDTALCWWIFISL. Residues 383 to 403 lie on the Cytoplasmic side of the membrane; the sequence is TQTMKLLKLRRNIVKLSLYRH. The helical transmembrane segment at 404 to 424 threads the bilayer; that stretch reads FTNTLILAVAASIVFIIWTTM. At 425-437 the chain is on the lumenal side; it reads KFRIVTCQSDWRE. Residues 438–458 traverse the membrane as a helical segment; it reads LWVDDAIWRLLFSMILFVIMV. Over 459-555 the chain is Cytoplasmic; the sequence is LWRPSANNQR…ITHFERSKME (97 aa). The tract at residues 473–516 is disordered; sequence PLSEEEEEDEQKEPMLKESFEGMKMRSTKQEPNGNSKVNKAQED. Over residues 484 to 496 the composition is skewed to basic and acidic residues; the sequence is KEPMLKESFEGMK. Over residues 502–511 the composition is skewed to polar residues; sequence QEPNGNSKVN. Residue Ser540 is modified to Phosphoserine.

Belongs to the LU7TM family. TMEM87 subfamily. As to quaternary structure, may interact with STOML3; STOML3 potentiates the mechanosensitive ion channel activity associated with TMEM87A.

Its subcellular location is the cell membrane. It localises to the golgi apparatus membrane. The protein resides in the cell projection. It is found in the ruffle. Functionally, potential monoatomic ion channel gated by mechanical force, implicated in normal touch sensitivity through the generation of mechanically activated currents. However, a direct channel activity is debated and an alternative could be that it functions as a chaperone for an unidentified mechanosensitive ion channel. Could also be involved in cell mechanosensitivity regulating cell adhesion and migration. May also be involved in retrograde transport from endosomes to the trans-Golgi network (TGN). This Homo sapiens (Human) protein is Transmembrane protein 87A.